Consider the following 167-residue polypeptide: SAR-endolysin (167 aa).

A helical; Signal-anchor for type II membrane protein membrane pass occupies residues 10–32 (SVMAAISGGAIAIASVLITGPGG). Catalysis depends on proton donor/acceptor residues Glu-37 and Asp-46.

Belongs to the glycosyl hydrolase 24 family.

Its subcellular location is the host cell inner membrane. The catalysed reaction is Hydrolysis of (1-&gt;4)-beta-linkages between N-acetylmuramic acid and N-acetyl-D-glucosamine residues in a peptidoglycan and between N-acetyl-D-glucosamine residues in chitodextrins.. Functionally, signal-arrest-release (SAR) endolysin with lysozyme activity that degrades host peptidoglycans and participates with the pinholin and spanin proteins in the sequential events which lead to programmed host cell lysis releasing the mature viral particles. Once the pinholin has permeabilized the host cell membrane, the SAR-endolysin is released into the periplasm where it breaks down the peptidoglycan layer. The sequence is that of SAR-endolysin (19) from Bacteriophage PS119.